A 397-amino-acid chain; its full sequence is Decapping and exoribonuclease protein (397 aa).

Over residues 1 to 20 (MESRGTKREAGKIEVAEPRN) the composition is skewed to basic and acidic residues. Residues 1–37 (MESRGTKREAGKIEVAEPRNKLPRPAPSLPTDPALYS) are disordered. R58 is a binding site for substrate. The segment at 67–88 (LRYYSPPPTNGQSPNFDLRDGY) is disordered. Substrate-binding positions include E101 and 131–133 (WRG). E192 serves as a coordination point for Mg(2+). 2 residues coordinate substrate: C217 and E234. Mg(2+)-binding residues include E234, D236, E253, and L254. Residues K255 and Q280 each coordinate substrate. T392 bears the Phosphothreonine mark. Position 394 is a phosphoserine (S394).

The protein belongs to the DXO/Dom3Z family. Requires Mg(2+) as cofactor.

It localises to the nucleus. The enzyme catalyses a 5'-end triphospho-ribonucleoside in mRNA + H2O = a 5'-end phospho-ribonucleoside in mRNA + diphosphate + H(+). It catalyses the reaction a 5'-end NAD(+)-phospho-ribonucleoside in mRNA + H2O = a 5'-end phospho-ribonucleoside in mRNA + NAD(+) + H(+). The catalysed reaction is a 5'-end NAD(+)-phospho-ribonucleoside in snoRNA + H2O = a 5'-end phospho-ribonucleoside in snoRNA + NAD(+) + H(+). It carries out the reaction a 5'-end (N(7)-methyl 5'-triphosphoguanosine)-ribonucleoside-ribonucleotide in mRNA + H2O = a (N(7)-methyl 5'-triphosphoguanosine)-nucleoside + a 5'-end phospho-ribonucleoside in mRNA + H(+). The enzyme catalyses a 5'-end FAD-phospho-ribonucleoside in mRNA + H2O = a 5'-end phospho-ribonucleoside in mRNA + FAD + H(+). It catalyses the reaction a 5'-end CoA-ribonucleoside in mRNA + H2O = 3'-dephospho-CoA + a 5'-end phospho-ribonucleoside in mRNA + H(+). Functionally, decapping enzyme for NAD-capped RNAs: specifically hydrolyzes the nicotinamide adenine dinucleotide (NAD) cap from a subset of RNAs by removing the entire NAD moiety from the 5'-end of an NAD-capped RNA. The NAD-cap is present at the 5'-end of some RNAs and snoRNAs. In contrast to the canonical 5'-end N7 methylguanosine (m7G) cap, the NAD cap promotes mRNA decay. Preferentially acts on NAD-capped transcripts in response to environmental stress. Also acts as a non-canonical decapping enzyme that removes the entire cap structure of m7G capped or incompletely capped RNAs and mediates their subsequent degradation. Specifically degrades pre-mRNAs with a defective 5'-end m7G cap and is part of a pre-mRNA capping quality control. Has decapping activity toward incomplete 5'-end m7G cap mRNAs such as unmethylated 5'-end-capped RNA (cap0), while it has no activity toward 2'-O-ribose methylated m7G cap (cap1). In contrast to canonical decapping enzymes DCP2 and NUDT16, which cleave the cap within the triphosphate linkage, the decapping activity releases the entire cap structure GpppN and a 5'-end monophosphate RNA. Also has 5'-3' exoribonuclease activities: The 5'-end monophosphate RNA is then degraded by the 5'-3' exoribonuclease activity, enabling this enzyme to decap and degrade incompletely capped mRNAs. Also possesses RNA 5'-pyrophosphohydrolase activity by hydrolyzing the 5'-end triphosphate to release pyrophosphates. Exhibits decapping activity towards FAD-capped RNAs. Exhibits decapping activity towards dpCoA-capped RNAs in vitro. The polypeptide is Decapping and exoribonuclease protein (Bos taurus (Bovine)).